The chain runs to 452 residues: Phosphatidylinositol N-acetylglucosaminyltransferase GPI3 subunit (452 aa).

The chain crosses the membrane as a helical span at residues 407–427; that stretch reads LYLLCGIVEYMLFFLLEWLYP.

This sequence belongs to the glycosyltransferase group 1 family. In terms of assembly, component of the phosphatidylinositol N-acetylglucosaminyltransferase complex composed of at least GPI1, GPI2, GPI3, GPI15, GPI19 and ERI1.

It is found in the endoplasmic reticulum membrane. It catalyses the reaction a 1,2-diacyl-sn-glycero-3-phospho-(1D-myo-inositol) + UDP-N-acetyl-alpha-D-glucosamine = a 6-(N-acetyl-alpha-D-glucosaminyl)-1-(1,2-diacyl-sn-glycero-3-phospho)-1D-myo-inositol + UDP + H(+). It functions in the pathway glycolipid biosynthesis; glycosylphosphatidylinositol-anchor biosynthesis. Inhibited by Ras, probably via the interaction between RAS2 and ERI1. Functionally, catalytic subunit in the complex catalyzing the transfer of N-acetylglucosamine from UDP-N-acetylglucosamine to phosphatidylinositol, the first step of GPI biosynthesis. The sequence is that of Phosphatidylinositol N-acetylglucosaminyltransferase GPI3 subunit (SPT14) from Saccharomyces cerevisiae (strain YJM789) (Baker's yeast).